The following is a 218-amino-acid chain: Small ribosomal subunit protein uS3c (218 aa).

A KH type-2 domain is found at 47 to 118 (VQKNMRTSSG…KLNIAVTRIA (72 aa)).

This sequence belongs to the universal ribosomal protein uS3 family. As to quaternary structure, part of the 30S ribosomal subunit.

The protein resides in the plastid. The protein localises to the chloroplast. This Nicotiana tomentosiformis (Tobacco) protein is Small ribosomal subunit protein uS3c (rps3).